Reading from the N-terminus, the 117-residue chain is Acylphosphatase (117 aa).

One can recognise an Acylphosphatase-like domain in the interval arginine 21–proline 107. Active-site residues include arginine 36 and asparagine 54.

Belongs to the acylphosphatase family.

It carries out the reaction an acyl phosphate + H2O = a carboxylate + phosphate + H(+). The protein is Acylphosphatase (acyP) of Synechococcus sp. (strain RCC307).